A 226-amino-acid chain; its full sequence is Thymidylate kinase (226 aa).

16–23 is an ATP binding site; that stretch reads GIDGAGKT.

It belongs to the thymidylate kinase family.

It carries out the reaction dTMP + ATP = dTDP + ADP. Its function is as follows. Phosphorylation of dTMP to form dTDP in both de novo and salvage pathways of dTTP synthesis. The protein is Thymidylate kinase of Xanthomonas euvesicatoria pv. vesicatoria (strain 85-10) (Xanthomonas campestris pv. vesicatoria).